The sequence spans 914 residues: Translation initiation factor IF-2 (914 aa).

Residues 58 to 160 (KTEKKQTAKK…EAEPKIEVMP (103 aa)) form a disordered region. A compositionally biased stretch (basic and acidic residues) spans 70–91 (KKDTVKKDTVKKTAVKKDDSKA). A compositionally biased stretch (basic residues) spans 92 to 103 (AKKTKPIAKKSA). The span at 104–160 (PKTEKKVEKKVESKISKPDNEILEAKPEISKPEIKAEPKKEEIEQKQEAEPKIEVMP) shows a compositional bias: basic and acidic residues. The tr-type G domain maps to 413–582 (ERVPVITIMG…LLQADLLELK (170 aa)). Residues 422–429 (GHVDHGKT) are G1. A GTP-binding site is contributed by 422–429 (GHVDHGKT). Residues 447–451 (GITQH) form a G2 region. A G3 region spans residues 468–471 (DTPG). Residues 468–472 (DTPGH) and 522–525 (NKMD) contribute to the GTP site. The interval 522–525 (NKMD) is G4. Positions 558-560 (SAK) are G5.

It belongs to the TRAFAC class translation factor GTPase superfamily. Classic translation factor GTPase family. IF-2 subfamily.

Its subcellular location is the cytoplasm. In terms of biological role, one of the essential components for the initiation of protein synthesis. Protects formylmethionyl-tRNA from spontaneous hydrolysis and promotes its binding to the 30S ribosomal subunits. Also involved in the hydrolysis of GTP during the formation of the 70S ribosomal complex. This chain is Translation initiation factor IF-2, found in Campylobacter hominis (strain ATCC BAA-381 / DSM 21671 / CCUG 45161 / LMG 19568 / NCTC 13146 / CH001A).